Consider the following 240-residue polypeptide: Adenosine 5'-phosphosulfate reductase (240 aa).

[4Fe-4S] cluster is bound by residues C125, C126, C208, and C211. C234 (nucleophile; cysteine thiosulfonate intermediate) is an active-site residue.

The protein belongs to the PAPS reductase family. CysH subfamily. [4Fe-4S] cluster serves as cofactor.

It localises to the cytoplasm. The catalysed reaction is [thioredoxin]-disulfide + sulfite + AMP + 2 H(+) = adenosine 5'-phosphosulfate + [thioredoxin]-dithiol. Its pathway is sulfur metabolism; hydrogen sulfide biosynthesis; sulfite from sulfate. Functionally, catalyzes the formation of sulfite from adenosine 5'-phosphosulfate (APS) using thioredoxin as an electron donor. This Oceanobacillus iheyensis (strain DSM 14371 / CIP 107618 / JCM 11309 / KCTC 3954 / HTE831) protein is Adenosine 5'-phosphosulfate reductase.